A 298-amino-acid polypeptide reads, in one-letter code: Tyrosine recombinase XerC (298 aa).

The 87-residue stretch at 2–88 (TDLHTDVERY…ALRSFFDWLV (87 aa)) folds into the Core-binding (CB) domain. Residues 109–288 (HLPKNIDVDD…DFQHLASVYD (180 aa)) enclose the Tyr recombinase domain. Catalysis depends on residues arginine 148, lysine 172, histidine 240, arginine 243, and histidine 266. Tyrosine 275 acts as the O-(3'-phospho-DNA)-tyrosine intermediate in catalysis.

This sequence belongs to the 'phage' integrase family. XerC subfamily. In terms of assembly, forms a cyclic heterotetrameric complex composed of two molecules of XerC and two molecules of XerD, in which XerC interacts with XerD via its C-terminal region, XerD interacts with XerC via its C-terminal region and so on.

The protein localises to the cytoplasm. Its activity is regulated as follows. FtsK may regulate the catalytic switch between XerC and XerD in the heterotetrameric complex during the two steps of the recombination process. Site-specific tyrosine recombinase, which acts by catalyzing the cutting and rejoining of the recombining DNA molecules. Binds cooperatively to specific DNA consensus sequences that are separated from XerD binding sites by a short central region, forming the heterotetrameric XerC-XerD complex that recombines DNA substrates. The complex is essential to convert dimers of the bacterial chromosome into monomers to permit their segregation at cell division. It also contributes to the segregational stability of plasmids. In the complex XerC specifically exchanges the top DNA strands. In Escherichia coli O6:K15:H31 (strain 536 / UPEC), this protein is Tyrosine recombinase XerC.